A 236-amino-acid polypeptide reads, in one-letter code: MARFKRILLKLSGESLMGEKQYGIDEKRLGEYAQQIKEIHDLGVQIGIVIGGGNIFRGLSGASKGFDRVKGDQMGMLATVINSLGLSSALGAAGVKARVLTAIRMEPIGEFYNKWKAIEAMENGEVVIMSAGTGNPFFTTDTGSSLRGIEIEADVMLKGTRVDGIYTADPEKDPTATKFDDITYDEVLKRGLKVMDLTATCMCKENNLPIIVFDMDTVGNLKKVMTGENIGTLVHN.

10-13 (KLSG) lines the ATP pocket. Gly-52 serves as a coordination point for UMP. ATP-binding residues include Gly-53 and Arg-57. UMP is bound by residues Asp-72 and 133-140 (TGNPFFTT). Residues Thr-160, Tyr-166, and Asp-169 each contribute to the ATP site.

The protein belongs to the UMP kinase family. Homohexamer.

The protein localises to the cytoplasm. The catalysed reaction is UMP + ATP = UDP + ADP. Its pathway is pyrimidine metabolism; CTP biosynthesis via de novo pathway; UDP from UMP (UMPK route): step 1/1. With respect to regulation, inhibited by UTP. Functionally, catalyzes the reversible phosphorylation of UMP to UDP. In Phocaeicola vulgatus (strain ATCC 8482 / DSM 1447 / JCM 5826 / CCUG 4940 / NBRC 14291 / NCTC 11154) (Bacteroides vulgatus), this protein is Uridylate kinase.